The primary structure comprises 328 residues: DNA-directed RNA polymerase subunit alpha (328 aa).

The interval 1–235 is alpha N-terminal domain (alpha-NTD); sequence MQGSVTEFLK…EQLDAFVDLR (235 aa). Residues 249–328 form an alpha C-terminal domain (alpha-CTD) region; sequence FDPILLRPVD…ENWPPASLAE (80 aa).

This sequence belongs to the RNA polymerase alpha chain family. As to quaternary structure, homodimer. The RNAP catalytic core consists of 2 alpha, 1 beta, 1 beta' and 1 omega subunit. When a sigma factor is associated with the core the holoenzyme is formed, which can initiate transcription.

The enzyme catalyses RNA(n) + a ribonucleoside 5'-triphosphate = RNA(n+1) + diphosphate. DNA-dependent RNA polymerase catalyzes the transcription of DNA into RNA using the four ribonucleoside triphosphates as substrates. In Pseudoalteromonas translucida (strain TAC 125), this protein is DNA-directed RNA polymerase subunit alpha.